We begin with the raw amino-acid sequence, 430 residues long: Adenylosuccinate synthetase (430 aa).

GTP contacts are provided by residues 12–18 and 40–42; these read GDEGKGK and GHT. D13 (proton acceptor) is an active-site residue. The Mg(2+) site is built by D13 and G40. Residues 13 to 16, 38 to 41, T130, R144, Q224, T239, and R303 contribute to the IMP site; these read DEGK and NAGH. The active-site Proton donor is the H41. A substrate-binding site is contributed by 299-305; that stretch reads TVTGRKR. Residues R305, 331–333, and 413–415 contribute to the GTP site; these read KLD and STS.

Belongs to the adenylosuccinate synthetase family. In terms of assembly, homodimer. Requires Mg(2+) as cofactor.

It localises to the cytoplasm. The catalysed reaction is IMP + L-aspartate + GTP = N(6)-(1,2-dicarboxyethyl)-AMP + GDP + phosphate + 2 H(+). Its pathway is purine metabolism; AMP biosynthesis via de novo pathway; AMP from IMP: step 1/2. Its function is as follows. Plays an important role in the de novo pathway of purine nucleotide biosynthesis. Catalyzes the first committed step in the biosynthesis of AMP from IMP. In Paracoccus denitrificans (strain Pd 1222), this protein is Adenylosuccinate synthetase.